Consider the following 132-residue polypeptide: Small ribosomal subunit protein uS8 (132 aa).

Belongs to the universal ribosomal protein uS8 family. In terms of assembly, part of the 30S ribosomal subunit. Contacts proteins S5 and S12.

One of the primary rRNA binding proteins, it binds directly to 16S rRNA central domain where it helps coordinate assembly of the platform of the 30S subunit. This is Small ribosomal subunit protein uS8 from Levilactobacillus brevis (strain ATCC 367 / BCRC 12310 / CIP 105137 / JCM 1170 / LMG 11437 / NCIMB 947 / NCTC 947) (Lactobacillus brevis).